We begin with the raw amino-acid sequence, 112 residues long: UPF0102 protein Spea_0251 (112 aa).

The protein belongs to the UPF0102 family.

In Shewanella pealeana (strain ATCC 700345 / ANG-SQ1), this protein is UPF0102 protein Spea_0251.